The following is a 116-amino-acid chain: Large ribosomal subunit protein bL20c (116 aa).

This sequence belongs to the bacterial ribosomal protein bL20 family.

It localises to the plastid. The protein localises to the chloroplast. Binds directly to 23S ribosomal RNA and is necessary for the in vitro assembly process of the 50S ribosomal subunit. It is not involved in the protein synthesizing functions of that subunit. The sequence is that of Large ribosomal subunit protein bL20c from Cryptomeria japonica (Japanese cedar).